A 290-amino-acid polypeptide reads, in one-letter code: Tegument protein VP22 (290 aa).

Residues S98 to H112 are compositionally biased toward polar residues. Residues S98–S156 are disordered. Residues V118–P142 are compositionally biased toward low complexity. The Nuclear localization signal signature appears at A146 to R149. Positions L219–L231 match the Nuclear export signal motif.

This sequence belongs to the alphaherpesvirinae VP22 tegument protein family. As to quaternary structure, interacts with gE (via C-terminus); this interaction is necessary for the recruitment of VP22 to the Golgi and its packaging into virions. Interacts with gM (via C-terminus). Interacts with VP16; this interaction allows the formation of a tripartite complex composed of VP16, VP22 and UL41/VHS. Interacts with the capsid-binding protein UL16. Interacts with host CGAS. Post-translationally, highly phosphorylated in the host cell. Packaging is selective for underphosphorylated forms.

It localises to the virion tegument. Its subcellular location is the host cytoplasm. The protein localises to the host nucleus. The protein resides in the host Golgi apparatus. Its function is as follows. Tegument protein that plays different roles during the time course of infection. Participates in both the accumulation of viral mRNAs and viral protein translation at late time of infection. Modulates the RNase activity of the virion host shutoff protein UL41 probably to ensure necessary levels of key cellular mRNAs and proteins. Plays a role in microtubule reorganization that occurs after viral infection by stabilizing microtubule network. Plays a role in the inhibition of host innate immune system by targeting the CGAS enzymatic activity which is the principal cytosolic DNA sensor that detects invading viral DNA. Acts by mediating disruption of liquid-like droplets in which CGAS is activated, thereby preventing CGAS activity. This Equus caballus (Horse) protein is Tegument protein VP22 (11).